The sequence spans 1034 residues: Sodium bicarbonate cotransporter 3 (1034 aa).

Disordered regions lie at residues 1 to 31 (MEAD…KTSS) and 53 to 99 (HVPF…SQRV). The Extracellular portion of the chain corresponds to 1-476 (MEADGAGEQM…DFKDALSLQC (476 aa)). Residues S57, S60, S89, and S155 each carry the phosphoserine modification. The span at 60–77 (SRRRHKHRGHKHHHRRRK) shows a compositional bias: basic residues. Basic and acidic residues predominate over residues 78–90 (DKDSDKEDGRESP). A glycan (N-linked (GlcNAc...) asparagine) is linked at N176. Phosphoserine occurs at positions 238, 250, 260, 263, 268, and 271. A compositionally biased stretch (polar residues) spans 250 to 260 (SAPGNLDNSKS). A disordered region spans residues 250–276 (SAPGNLDNSKSGEMKGNGSGGSRENST). N274 carries an N-linked (GlcNAc...) asparagine glycan. A phosphoserine mark is found at S275 and S424. A helical transmembrane segment spans residues 477-497 (LASILFLYCACMSPVITFGGL). Topologically, residues 498 to 505 (LGEATEGR) are cytoplasmic. Residues 506-526 (ISAIESLFGASLTGIAYSLFA) traverse the membrane as a helical segment. Over 527 to 563 (GQPLTILGSTGPVLVFEKILFKFCRDYHLSYLSLRTS) the chain is Extracellular. Residues 564 to 584 (IGLWTSFLCIVLVATDASSLV) form a helical membrane-spanning segment. Residues 585–593 (CYITRFTEE) are Cytoplasmic-facing. A helical membrane pass occupies residues 594-614 (AFAALICIIFIYEALEKLFHL). At 615–685 (GEIYAFNMHN…MFVGSACGPH (71 aa)) the chain is on the extracellular side. The cysteines at positions 634 and 636 are disulfide-linked. N644, N654, and N664 each carry an N-linked (GlcNAc...) asparagine glycan. A disulfide bridge connects residues C670 and C682. The helical transmembrane segment at 686 to 706 (GPYVPDVLFWCVVLFFTTFFL) threads the bilayer. Residues 707–729 (SSFLKQFKTKGYFPTKVRSTISD) lie on the Cytoplasmic side of the membrane. A helical transmembrane segment spans residues 730–750 (FAVFLTIVIMVAIDYLVGIPS). Residues 751–776 (PKLHVPEKFEPTDPSRGWIISPLGDN) lie on the Extracellular side of the membrane. A helical transmembrane segment spans residues 777–797 (PWWTLLIAAVPALLCTILIFM). The Cytoplasmic portion of the chain corresponds to 798 to 812 (DQQITAVIINRKEHK). Residues 813-833 (LKFIPMPVLYGVFLYMGVSSL) form a helical membrane-spanning segment. Residues 815 to 915 (FIPMPVLYGV…MDLCFTKREL (101 aa)) are essential for cell membrane localization and transport activity. Topologically, residues 834–876 (KGIQFFDRIKLFGMPAKHQPDLIYLRYVPLWKVHVFTVVQLTC) are extracellular. Residues 877–897 (LVLLWVIKASAAAVVFPMMVL) traverse the membrane as a helical segment. Over 898 to 1034 (ALVFVRKLMD…KKYMDAETSL (137 aa)) the chain is Cytoplasmic. The tract at residues 918–920 (LDD) is CA2-binding. A disordered region spans residues 926-946 (KKKKEDDKKKKEKEEAERMLQ). T951 bears the Phosphothreonine mark. Phosphoserine occurs at positions 960 and 1033. The PDZ-binding signature appears at 1031–1034 (ETSL).

This sequence belongs to the anion exchanger (TC 2.A.31) family. As to quaternary structure, forms a complex with ATP6V1B1 and NHERF1/EBP50. Interacts in a pH dependent-manner with CA2/carbonic anhydrase 2. Interacts with CFTR through NHERF1/EBP50. Interacts with USH1C. In terms of tissue distribution, expressed in the spiral ligament throughout the cochlea and in photoreceptors of the outer plexiform layer of the retina (at protein level).

It localises to the basolateral cell membrane. The protein localises to the apical cell membrane. It is found in the cell projection. Its subcellular location is the stereocilium. The protein resides in the cell membrane. The catalysed reaction is hydrogencarbonate(in) + Na(+)(in) = hydrogencarbonate(out) + Na(+)(out). With respect to regulation, activity is inhibited by 4,4'-di-isothiocyanatostilbene-2,2'-disulfonic acid (DIDS - an inhibitor of several anion channels and transporters). In terms of biological role, electroneutral sodium- and bicarbonate-dependent cotransporter with a Na(+):HCO3(-) 1:1 stoichiometry. Mediates the sodium-dependent bicarbonate transport important for pH recovery after acid load as well as for regulation of steady-state pH in the duodenum and vascular smooth muscle cells. Plays a key role in macrophage acidification, mediating bicarbonate import into the cytoplasm which is crucial for net acid extrusion and maintenance of cytoplasmic pH during phagocytosis. Provides cellular bicarbonate for de novo purine and pyrimidine synthesis and is a key mediator of de novo nucleotide synthesis downstream of mTORC1 signaling in proliferating cells. May be involved in maintaining locomotor activity, exploratory behavior, and hearing. This is Sodium bicarbonate cotransporter 3 (Slc4a7) from Mus musculus (Mouse).